A 91-amino-acid polypeptide reads, in one-letter code: Secretoglobin family 3A member 2 (91 aa).

The signal sequence occupies residues 1 to 21 (MKLVSIFLLVTIGICGYSATA).

This sequence belongs to the secretoglobin family. UGRP subfamily. In terms of assembly, homodimer; disulfide-linked. Monomer. Interacts with APOA1. In terms of tissue distribution, highly expressed in lung where it localizes to epithelial cells of the trachea, bronchus and bronchioles (at protein level). Expressed in club cells of the bronchioles. Also detected in the anterior and posterior lobes of the pituitary gland where it may localize to gonadotropic cells (at protein level). Not detected in other tissues tested.

The protein localises to the secreted. Its function is as follows. Secreted cytokine-like protein. Binds to the scavenger receptor MARCO. Can also bind to pathogens including the Gram-positive bacterium L.monocytogenes, the Gram-negative bacterium P.aeruginosa, and yeast. Strongly inhibits phospholipase A2 (PLA2G1B) activity. Seems to have anti-inflammatory effects in respiratory epithelium. Also has anti-fibrotic activity in lung. May play a role in fetal lung development and maturation. Promotes branching morphogenesis during early stages of lung development. In the pituitary, may inhibit production of follicle-stimulating hormone (FSH) and luteinizing hormone (LH). The polypeptide is Secretoglobin family 3A member 2 (Scgb3a2) (Mus musculus (Mouse)).